Consider the following 139-residue polypeptide: 3-hydroxyacyl-[acyl-carrier-protein] dehydratase FabZ (139 aa).

The active site involves His-47.

This sequence belongs to the thioester dehydratase family. FabZ subfamily.

The protein resides in the cytoplasm. The catalysed reaction is a (3R)-hydroxyacyl-[ACP] = a (2E)-enoyl-[ACP] + H2O. Functionally, involved in unsaturated fatty acids biosynthesis. Catalyzes the dehydration of short chain beta-hydroxyacyl-ACPs and long chain saturated and unsaturated beta-hydroxyacyl-ACPs. This Clostridium perfringens (strain ATCC 13124 / DSM 756 / JCM 1290 / NCIMB 6125 / NCTC 8237 / Type A) protein is 3-hydroxyacyl-[acyl-carrier-protein] dehydratase FabZ.